The primary structure comprises 262 residues: Transmembrane and immunoglobulin domain-containing protein 1 (262 aa).

An N-terminal signal peptide occupies residues 1–29; that stretch reads MAWKSSVIMQMGRFLLLVILFLPREMTSS. The Ig-like C2-type 1 domain occupies 30–114; it reads VLTVNGKTEN…LGRDQSVSVS (85 aa). Topologically, residues 30–220 are extracellular; sequence VLTVNGKTEN…IVKDKTVGVP (191 aa). Residues Cys-54 and Cys-103 are joined by a disulfide bond. N-linked (GlcNAc...) asparagine glycans are attached at residues Asn-58, Asn-83, Asn-118, Asn-158, and Asn-190. Residues 122-207 enclose the Ig-like C2-type 2 domain; it reads PPLLSGNDFQ…KSSLKTESLD (86 aa). A disulfide bridge links Cys-143 with Cys-195. The chain crosses the membrane as a helical span at residues 221–241; the sequence is IEPIIAACVVIFLTLCFGLIA. The Cytoplasmic portion of the chain corresponds to 242–262; it reads RRKKIMKLCMKDKDPHSETAL.

In terms of assembly, homodimer. In terms of processing, N-glycosylated.

The protein resides in the cell membrane. Its subcellular location is the cytoplasm. May control cell-cell adhesion, cell migration and proliferation, cell morphology, and protects renal epithelial cells from oxidative cell injury to promote cell survival. This chain is Transmembrane and immunoglobulin domain-containing protein 1, found in Homo sapiens (Human).